The primary structure comprises 339 residues: Carboxyvinyl-carboxyphosphonate phosphorylmutase, chloroplastic (339 aa).

A chloroplast-targeting transit peptide spans 1 to 30 (MSMLMAVKTTSLCCSSLNLTASPTFRRNPR).

Belongs to the isocitrate lyase/PEP mutase superfamily.

It is found in the plastid. Its subcellular location is the chloroplast. The enzyme catalyses 1-carboxyvinyl carboxyphosphonate + H(+) = 3-(hydrohydroxyphosphoryl)pyruvate + CO2. The chain is Carboxyvinyl-carboxyphosphonate phosphorylmutase, chloroplastic from Arabidopsis thaliana (Mouse-ear cress).